Here is a 729-residue protein sequence, read N- to C-terminus: Fibroblast growth factor receptor homolog 1 (729 aa).

The signal sequence occupies residues 1–36; sequence MAAAWSWRASHSTITMTSGSLVVLFLLLSIWQPAVQ. Over 37-309 the chain is Extracellular; that stretch reads VEGRRQMANS…VASGSLHSTS (273 aa). The disordered stretch occupies residues 56 to 101; sequence ARSQNKTPAITNNANQSSTSSADLDDGAADDDDNKADLPVNVSSKP. Over residues 66-77 the composition is skewed to low complexity; that stretch reads TNNANQSSTSSA. Asparagine 70 is a glycosylation site (N-linked (GlcNAc...) asparagine). Residues 78–89 show a composition bias toward acidic residues; sequence DLDDGAADDDDN. N-linked (GlcNAc...) asparagine glycosylation is found at asparagine 96, asparagine 134, asparagine 140, asparagine 171, asparagine 207, asparagine 213, asparagine 242, asparagine 246, and asparagine 282. Ig-like C2-type domains are found at residues 106–192 and 203–279; these read PKKM…VIVS and TGPL…NSLG. Cysteines 125 and 174 form a disulfide. Cysteine 220 and cysteine 272 are oxidised to a cystine. Residues 310-330 traverse the membrane as a helical segment; sequence FVYIFVFGGLIFIFMTTLFVF. Residues 331–729 are Cytoplasmic-facing; the sequence is YAIRKMKHEK…TDNLQKWCNY (399 aa). A Protein kinase domain is found at 416-692; sequence LVLGATLGEG…EIVEYMDKLL (277 aa). ATP is bound by residues 422–430 and lysine 443; that span reads LGEGAFGRV. The Proton acceptor role is filled by aspartate 556. Phosphotyrosine; by autocatalysis is present on tyrosine 587.

It belongs to the protein kinase superfamily. Tyr protein kinase family. Fibroblast growth factor receptor subfamily. As to expression, in early embryos, expression is specific to mesodermal primordium and invaginated mesodermal cells. At later stages, expression is seen in putative muscle precursor cells and in the CNS.

The protein resides in the membrane. It catalyses the reaction L-tyrosyl-[protein] + ATP = O-phospho-L-tyrosyl-[protein] + ADP + H(+). Its function is as follows. May be required for patterning of muscle precursor cells. May be essential for generation of mesodermal and endodermal layers, invaginations of various types of cells and CNS formation. The polypeptide is Fibroblast growth factor receptor homolog 1 (htl) (Drosophila melanogaster (Fruit fly)).